A 310-amino-acid chain; its full sequence is MTQLAQQEKKQTYNFNKLQKRLRRNVGNAIADFGMIEDGDKVMVCLSGGKDSYTLLDILLNLQQSAPIKFDIVAVNLDQKQPGFPEHVLPEYLESIGVDYKIVQENTYGIVKEKIPEGKTTCSLCSRLRRGILYRTATELGATKIALGHHRDDMLATLFLNMFYGGKMKSMPPKLISDDGKQIVIRPLAYCKEKDIEKYAIAKKFPIIPCNLCGSQPNLQRQVVKEMLNTWDRQYPGRLETMFSAMQNITLSHMCDPKLFDFKGIKHGQLIDGIEGDTAFDEERITPMQFEDEDQTDFSNNEMINFKEVN.

Positions 47 to 52 match the PP-loop motif motif; it reads SGGKDS. 3 residues coordinate [4Fe-4S] cluster: Cys122, Cys125, and Cys213.

Belongs to the TtcA family. As to quaternary structure, homodimer. It depends on Mg(2+) as a cofactor. [4Fe-4S] cluster serves as cofactor.

It is found in the cytoplasm. It carries out the reaction cytidine(32) in tRNA + S-sulfanyl-L-cysteinyl-[cysteine desulfurase] + AH2 + ATP = 2-thiocytidine(32) in tRNA + L-cysteinyl-[cysteine desulfurase] + A + AMP + diphosphate + H(+). Its pathway is tRNA modification. Its function is as follows. Catalyzes the ATP-dependent 2-thiolation of cytidine in position 32 of tRNA, to form 2-thiocytidine (s(2)C32). The sulfur atoms are provided by the cysteine/cysteine desulfurase (IscS) system. This chain is tRNA-cytidine(32) 2-sulfurtransferase, found in Haemophilus influenzae (strain PittEE).